A 669-amino-acid polypeptide reads, in one-letter code: Threonine--tRNA ligase (669 aa).

Residues 3 to 60 (DAQQITLLVDGEETKVTTGTTGAELFFERRDVVVARVNGELKDLDQELPEGAEVEGVT) enclose the TGS domain. A catalytic region spans residues 260 to 566 (DHRKLGSELD…LTEHYAGAFP (307 aa)). The Zn(2+) site is built by cysteine 365, histidine 416, and histidine 543.

The protein belongs to the class-II aminoacyl-tRNA synthetase family. In terms of assembly, homodimer. Zn(2+) is required as a cofactor.

It localises to the cytoplasm. The enzyme catalyses tRNA(Thr) + L-threonine + ATP = L-threonyl-tRNA(Thr) + AMP + diphosphate + H(+). Functionally, catalyzes the attachment of threonine to tRNA(Thr) in a two-step reaction: L-threonine is first activated by ATP to form Thr-AMP and then transferred to the acceptor end of tRNA(Thr). Also edits incorrectly charged L-seryl-tRNA(Thr). The protein is Threonine--tRNA ligase of Pseudarthrobacter chlorophenolicus (strain ATCC 700700 / DSM 12829 / CIP 107037 / JCM 12360 / KCTC 9906 / NCIMB 13794 / A6) (Arthrobacter chlorophenolicus).